Here is a 111-residue protein sequence, read N- to C-terminus: MKHLAAYLLLTLGGKATPSAADVKAVLESVGIEADSDRLDKLISELEGKDVNELIAEGSSKLASVPSGGAGGAAAAGGAAAAGGAAEAAPEEAKEEEKEESDDDMGFGLFD.

The tract at residues 62 to 111 (LASVPSGGAGGAAAAGGAAAAGGAAEAAPEEAKEEEKEESDDDMGFGLFD) is disordered. Residues 76-88 (AGGAAAAGGAAEA) show a composition bias toward low complexity. Ser-101 carries the post-translational modification Phosphoserine.

It belongs to the eukaryotic ribosomal protein P1/P2 family. As to quaternary structure, P1 and P2 exist as dimers at the large ribosomal subunit.

Functionally, plays an important role in the elongation step of protein synthesis. This chain is Large ribosomal subunit protein P2, found in Podospora anserina (Pleurage anserina).